A 343-amino-acid chain; its full sequence is uncharacterized protein (343 aa).

The protein belongs to the histone deacetylase family.

Functionally, putative deacetylase. This is an uncharacterized protein from Methanocaldococcus jannaschii (strain ATCC 43067 / DSM 2661 / JAL-1 / JCM 10045 / NBRC 100440) (Methanococcus jannaschii).